The following is a 1630-amino-acid chain: Histone transcription regulator 3 homolog (1630 aa).

The TPR 1 repeat unit spans residues 8 to 42; it reads NAASEDLDKEKRTLEIRIEEAVQIYQNALSAQKQG. The disordered stretch occupies residues 325–347; sequence KDIVPPPSDNLPKPQLLKRPIDD. The stretch at 1230–1263 is one TPR 2 repeat; it reads WRALYMLGKACRKCGDMENALVHFEAAAALAPTK.

It belongs to the HIR3 family. Interacts with hip1 and slm9.

Its subcellular location is the nucleus. Has a role in a nucleosome assembly pathway that is required for the integrity of heterochromatin and proper chromosome segregation. Required for transcriptional silencing in the outer repeat (otr) region of centromeric repeats and the Tf2 long terminal repeat retrotransposons. The protein is Histone transcription regulator 3 homolog (hip3) of Schizosaccharomyces pombe (strain 972 / ATCC 24843) (Fission yeast).